Here is a 186-residue protein sequence, read N- to C-terminus: UPF0301 protein Swoo_1337 (186 aa).

The protein belongs to the UPF0301 (AlgH) family.

This chain is UPF0301 protein Swoo_1337, found in Shewanella woodyi (strain ATCC 51908 / MS32).